An 86-amino-acid polypeptide reads, in one-letter code: Omega-theraphotoxin-Hhn1a 2 (86 aa).

Positions 1–21 are cleaved as a signal peptide; sequence MKSIVFVALLGLALLAVVCSA. Residues 22–50 constitute a propeptide that is removed on maturation; it reads SEDAHKELLKEVVRAMVVDKTDAVQAEER. 3 disulfide bridges follow: C52-C66, C59-C71, and C65-C78.

It belongs to the neurotoxin 10 (Hwtx-1) family. 17 (Hntx-9) subfamily. Expressed by the venom gland.

Its subcellular location is the secreted. Its function is as follows. Ion channel inhibitor. The chain is Omega-theraphotoxin-Hhn1a 2 from Cyriopagopus hainanus (Chinese bird spider).